A 459-amino-acid chain; its full sequence is Phosphoenolpyruvate carboxylase (459 aa).

This sequence belongs to the PEPCase type 2 family. Homotetramer. Mg(2+) serves as cofactor.

It carries out the reaction oxaloacetate + phosphate = phosphoenolpyruvate + hydrogencarbonate. Its function is as follows. Catalyzes the irreversible beta-carboxylation of phosphoenolpyruvate (PEP) to form oxaloacetate (OAA), a four-carbon dicarboxylic acid source for the tricarboxylic acid cycle. The chain is Phosphoenolpyruvate carboxylase from Pyrobaculum calidifontis (strain DSM 21063 / JCM 11548 / VA1).